The following is a 1303-amino-acid chain: Latent-transforming growth factor beta-binding protein 3 (1303 aa).

An N-terminal signal peptide occupies residues 1–43 (MPGPRGAAGGLAPEMRGAGAAGLLALLLLLLLLLLGLGGRVEG). N-linked (GlcNAc...) asparagine glycosylation is present at Asn89. The EGF-like 1 domain occupies 109-141 (RVVVCPLPCMNGGQCSSRNQCLCPPDFTGRFCQ). 6 disulfides stabilise this stretch: Cys113–Cys123, Cys117–Cys129, Cys131–Cys140, Cys279–Cys303, Cys289–Cys316, and Cys304–Cys319. The tract at residues 247–282 (SSNAESAAPSQHLLPHPKPSHPRPPTQKPLGRCFQD) is disordered. The TB 1 domain maps to 277–331 (GRCFQDTLPKQPCGSNPLPGLTKQEDCCGSIGTAWGQSKCHKCPQLQYTGVQKPG). Asn349 carries N-linked (GlcNAc...) asparagine glycosylation. Positions 355–395 (DINECAMPGVCRHGDCLNNPGSYRCVCPPGHSLGPSRTQCI) constitute an EGF-like 2; calcium-binding domain. Cystine bridges form between Cys359–Cys370, Cys365–Cys379, Cys381–Cys394, Cys405–Cys428, Cys415–Cys440, Cys429–Cys443, and Cys430–Cys455. Residues 403 to 455 (SLCFRLVSPEHQCQHPLTTRLTRQLCCCSVGKAWGARCQRCPTDGTAAFKEIC) enclose the TB 2 domain. The segment at 478–552 (FSLFLHPDGP…ISRPSPPTMR (75 aa)) is disordered. Low complexity predominate over residues 529 to 540 (PTATTTPARPYP). The EGF-like 3 domain occupies 574–615 (ETDECRLNQNICGHGECVPGPPDYSCHCNPGYRSHPQHRYCV). Intrachain disulfides connect Cys578/Cys590, Cys585/Cys599, Cys601/Cys614, Cys620/Cys632, Cys625/Cys641, Cys664/Cys676, Cys670/Cys685, Cys687/Cys701, Cys748/Cys759, Cys754/Cys768, Cys770/Cys783, Cys789/Cys800, Cys795/Cys809, Cys811/Cys824, Cys830/Cys841, Cys836/Cys850, Cys852/Cys864, Cys870/Cys883, Cys877/Cys892, Cys894/Cys907, Cys919/Cys942, Cys929/Cys954, Cys943/Cys959, Cys944/Cys971, Cys997/Cys1010, Cys1005/Cys1019, Cys1021/Cys1034, Cys1040/Cys1051, Cys1046/Cys1060, Cys1062/Cys1075, Cys1086/Cys1097, Cys1092/Cys1106, Cys1108/Cys1121, Cys1138/Cys1162, Cys1148/Cys1174, Cys1163/Cys1177, and Cys1164/Cys1186. In terms of domain architecture, EGF-like 4; calcium-binding spans 616 to 659 (DVNECEAEPCGPGRGICMNTGGSYNCHCNRGYRLHVGAGGRSCV). Positions 660–702 (DLNECAKPHLCGDGGFCINFPGHYKCNCYPGYRLKASRPPVCE) constitute an EGF-like 5; calcium-binding domain. In terms of domain architecture, EGF-like 6; calcium-binding spans 744-784 (DVNECAEGSPCSPGWCENLPGSFRCTCAQGYAPAPDGRSCL). Residues 785–825 (DVDECEAGDVCDNGICSNTPGSFQCQCLSGYHLSRDRSHCE) enclose the EGF-like 7; calcium-binding domain. The 40-residue stretch at 826-865 (DIDECDFPAACIGGDCINTNGSYRCLCPQGHRLVGGRKCQ) folds into the EGF-like 8; calcium-binding domain. N-linked (GlcNAc...) asparagine glycosylation is present at Asn845. The EGF-like 9; calcium-binding domain occupies 866 to 908 (DIDECSQDPSLCLPHGACKNLQGSYVCVCDEGFTPTQDQHGCE). In terms of domain architecture, TB 3 spans 917–971 (KECYLNFDDTVFCDSVLATNVTQQECCCSLGAGWGDHCEIYPCPVYSSAEFHSLC). N-linked (GlcNAc...) asparagine glycosylation occurs at Asn936. One can recognise an EGF-like 10; calcium-binding domain in the interval 993–1035 (DIDECMLFGSEICKEGKCVNTQPGYECYCKQGFYYDGNLLECV). Residues 1036 to 1076 (DVDECLDESNCRNGVCENTRGGYRCACTPPAEYSPAQRQCL) enclose the EGF-like 11; calcium-binding domain. Residues 1082–1122 (DVDECQDPAACRPGRCVNLPGSYRCECRPPWVPGPSGRDCQ) enclose the EGF-like 12; calcium-binding domain. The region spanning 1136–1186 (DVCWSQRGEDGMCAGPLAGPALTFDDCCCRQGRGWGAQCRPCPPRGAGSHC) is the TB 4 domain. Over residues 1188–1198 (TSQSESNSFWD) the composition is skewed to polar residues. Residues 1188 to 1219 (TSQSESNSFWDTSPLLLGKPPRDEDSSEEDSD) form a disordered region. Positions 1254 to 1298 (DIDECRELNQRGLLCKSERCVNTSGSFRCVCKAGFARSRPHGACV) constitute an EGF-like 13; calcium-binding domain. 2 disulfide bridges follow: Cys1258/Cys1273 and Cys1268/Cys1282. The N-linked (GlcNAc...) asparagine glycan is linked to Asn1275.

This sequence belongs to the LTBP family. As to quaternary structure, forms part of the large latent transforming growth factor beta precursor complex; removal is essential for activation of complex. Interacts with EFEMP2. Post-translationally, contains hydroxylated asparagine residues. In terms of processing, two intrachain disulfide bonds from the TB3 domain are rearranged upon TGFB1 binding, and form interchain bonds with TGFB1 propeptide, anchoring it to the extracellular matrix. Isoform 2: Expressed prominently in heart, skeletal muscle, prostate, testis, small intestine and ovary. Isoform 1: Strongly expressed in pancreas and liver.

Its subcellular location is the secreted. The protein resides in the extracellular space. It is found in the extracellular matrix. Functionally, key regulator of transforming growth factor beta (TGFB1, TGFB2 and TGFB3) that controls TGF-beta activation by maintaining it in a latent state during storage in extracellular space. Associates specifically via disulfide bonds with the Latency-associated peptide (LAP), which is the regulatory chain of TGF-beta, and regulates integrin-dependent activation of TGF-beta. This chain is Latent-transforming growth factor beta-binding protein 3 (LTBP3), found in Homo sapiens (Human).